A 559-amino-acid polypeptide reads, in one-letter code: Nucleoprotein (559 aa).

The tract at residues 53 to 235 (MRKEKRTDSD…ITQEQSQINI (183 aa)) is binding site for the cap structure m7GTP. Mn(2+)-binding residues include Asp378 and Glu380. Residues Glu388, Cys495, His498, and Cys519 each contribute to the Zn(2+) site. Asp523 contributes to the Mn(2+) binding site.

It belongs to the arenaviridae nucleocapsid protein family. Homomultimerizes to form the nucleocapsid. Binds to viral genomic RNA. Interacts with glycoprotein G2. Interacts with protein Z; this interaction probably directs the encapsidated genome to budding sites. Interacts with protein L; this interaction does not interfere with Z-L interaction. Interacts with host IKBKE (via Protein kinase domain); the interaction inhibits IKBKE kinase activity.

Its subcellular location is the virion. The protein localises to the host cytoplasm. Functionally, encapsidates the genome, protecting it from nucleases. The encapsidated genomic RNA is termed the nucleocapsid (NC). Serves as template for viral transcription and replication. The increased presence of protein N in host cell does not seem to trigger the switch from transcription to replication as observed in other negative strain RNA viruses. Through the interaction with host IKBKE, strongly inhibits the phosphorylation and nuclear translocation of host IRF3, a protein involved in interferon activation pathway, leading to the inhibition of interferon-beta and IRF3-dependent promoters activation. Also encodes a functional 3'-5' exoribonuclease that degrades preferentially dsRNA substrates and thereby participates in the suppression of interferon induction. The protein is Nucleoprotein of Sooretamys angouya (Paraguayan rice rat).